Here is a 398-residue protein sequence, read N- to C-terminus: S-adenosylmethionine synthase (398 aa).

ATP is bound at residue 136–141; sequence GTGSSD.

Belongs to the AdoMet synthase 2 family. Mg(2+) is required as a cofactor.

It catalyses the reaction L-methionine + ATP + H2O = S-adenosyl-L-methionine + phosphate + diphosphate. It functions in the pathway amino-acid biosynthesis; S-adenosyl-L-methionine biosynthesis; S-adenosyl-L-methionine from L-methionine: step 1/1. Functionally, catalyzes the formation of S-adenosylmethionine from methionine and ATP. The polypeptide is S-adenosylmethionine synthase (Methanosarcina mazei (strain ATCC BAA-159 / DSM 3647 / Goe1 / Go1 / JCM 11833 / OCM 88) (Methanosarcina frisia)).